Consider the following 922-residue polypeptide: Putative ATP-dependent helicase/translocase YwqA (922 aa).

Positions 462-625 constitute a Helicase ATP-binding domain; sequence LFLRESGFGA…WSIFDFMNKG (164 aa). ATP is bound at residue 475–482; it reads DDMGLGKT. The DEAQ box signature appears at 576-579; the sequence is DEAQ. The Helicase C-terminal domain occupies 753–907; it reads KLLELMTAIR…QSENWITELS (155 aa).

Belongs to the SNF2/RAD54 helicase family. Interacts with the RNA polymerase core.

The polypeptide is Putative ATP-dependent helicase/translocase YwqA (ywqA) (Bacillus subtilis (strain 168)).